Reading from the N-terminus, the 243-residue chain is 7-cyano-7-deazaguanine synthase (243 aa).

An ATP-binding site is contributed by 18-28; the sequence is FSGGQDSATCL. Positions 206, 221, 224, and 227 each coordinate Zn(2+).

It belongs to the QueC family. Requires Zn(2+) as cofactor.

It carries out the reaction 7-carboxy-7-deazaguanine + NH4(+) + ATP = 7-cyano-7-deazaguanine + ADP + phosphate + H2O + H(+). The protein operates within purine metabolism; 7-cyano-7-deazaguanine biosynthesis. Functionally, catalyzes the ATP-dependent conversion of 7-carboxy-7-deazaguanine (CDG) to 7-cyano-7-deazaguanine (preQ(0)). In Methylorubrum extorquens (strain PA1) (Methylobacterium extorquens), this protein is 7-cyano-7-deazaguanine synthase.